The following is a 257-amino-acid chain: Folate receptor alpha (257 aa).

The signal sequence occupies residues 1–24 (MAQRMTTQLLLLLVWVAVVGEAQT). Cystine bridges form between Cys-37–Cys-65, Cys-57–Cys-105, Cys-66–Cys-109, Cys-89–Cys-175, Cys-96–Cys-146, Cys-135–Cys-209, Cys-139–Cys-189, and Cys-152–Cys-169. Asn-69 carries N-linked (GlcNAc...) asparagine glycosylation. Residues Asp-103, Tyr-107, 124-128 (WRKER), 157-162 (HKGWNW), and Ser-196 contribute to the folate site. An N-linked (GlcNAc...) asparagine glycan is attached at Asn-161. N-linked (GlcNAc...) asparagine glycosylation occurs at Asn-201. Ser-234 carries GPI-anchor amidated serine lipidation. The propeptide at 235–257 (GAGPWAAWPFLLSLALMLLWLLS) is removed in mature form.

Belongs to the folate receptor family. The secreted form is derived from the membrane-bound form either by cleavage of the GPI anchor, or/and by proteolysis catalyzed by a metalloprotease. Primarily expressed in tissues of epithelial origin. Expression is increased in malignant tissues. Expressed in kidney, lung and cerebellum. Detected in placenta and thymus epithelium.

The protein resides in the cell membrane. The protein localises to the apical cell membrane. Its subcellular location is the basolateral cell membrane. It localises to the secreted. It is found in the cytoplasmic vesicle. The protein resides in the clathrin-coated vesicle. The protein localises to the endosome. Functionally, binds to folate and reduced folic acid derivatives and mediates delivery of 5-methyltetrahydrofolate and folate analogs into the interior of cells. Has high affinity for folate and folic acid analogs at neutral pH. Exposure to slightly acidic pH after receptor endocytosis triggers a conformation change that strongly reduces its affinity for folates and mediates their release. Required for normal embryonic development and normal cell proliferation. The protein is Folate receptor alpha (FOLR1) of Homo sapiens (Human).